Reading from the N-terminus, the 148-residue chain is MGRFIFVSFSLLVVFFSLSGTEAGVCCPLGWSGYDQNCYKAFEELMNWADAEKFCTQQHKGSHLVSLHNIAEADFVVKKIVSVLKDGVIWMGLNDVWNECNWGWTDGAQLDYKAWNVESNCFIFKTAENHLVTYGLQWDTQFRLQEPG.

A signal peptide spans 1–23 (MGRFIFVSFSLLVVFFSLSGTEA). In terms of domain architecture, C-type lectin spans 34–148 (YDQNCYKAFE…DTQFRLQEPG (115 aa)).

It belongs to the snaclec family. In terms of assembly, heterodimer; disulfide-linked. Contains disulfide bonds. As to expression, expressed by the venom gland.

Its subcellular location is the secreted. Functionally, interferes with one step of hemostasis (modulation of platelet aggregation, or coagulation cascade, for example). The chain is Snaclec 4 from Echis pyramidum leakeyi (Leakey's carpet viper).